The following is a 239-amino-acid chain: tRNA (guanine-N(1)-)-methyltransferase (239 aa).

S-adenosyl-L-methionine-binding positions include glycine 108 and 127 to 132 (LGDYVL).

It belongs to the RNA methyltransferase TrmD family. Homodimer.

It is found in the cytoplasm. It carries out the reaction guanosine(37) in tRNA + S-adenosyl-L-methionine = N(1)-methylguanosine(37) in tRNA + S-adenosyl-L-homocysteine + H(+). Functionally, specifically methylates guanosine-37 in various tRNAs. The chain is tRNA (guanine-N(1)-)-methyltransferase from Streptococcus pneumoniae (strain JJA).